Consider the following 166-residue polypeptide: 3-isopropylmalate dehydratase small subunit (166 aa).

Belongs to the LeuD family. LeuD type 2 subfamily. As to quaternary structure, heterodimer of LeuC and LeuD.

It catalyses the reaction (2R,3S)-3-isopropylmalate = (2S)-2-isopropylmalate. Its pathway is amino-acid biosynthesis; L-leucine biosynthesis; L-leucine from 3-methyl-2-oxobutanoate: step 2/4. In terms of biological role, catalyzes the isomerization between 2-isopropylmalate and 3-isopropylmalate, via the formation of 2-isopropylmaleate. The protein is 3-isopropylmalate dehydratase small subunit of Aliarcobacter butzleri (strain RM4018) (Arcobacter butzleri).